We begin with the raw amino-acid sequence, 179 residues long: Segregation and condensation protein B (179 aa).

It belongs to the ScpB family. Homodimer. Homodimerization may be required to stabilize the binding of ScpA to the Smc head domains. Component of a cohesin-like complex composed of ScpA, ScpB and the Smc homodimer, in which ScpA and ScpB bind to the head domain of Smc. The presence of the three proteins is required for the association of the complex with DNA.

Its subcellular location is the cytoplasm. Its function is as follows. Participates in chromosomal partition during cell division. May act via the formation of a condensin-like complex containing Smc and ScpA that pull DNA away from mid-cell into both cell halves. The polypeptide is Segregation and condensation protein B (Staphylococcus haemolyticus (strain JCSC1435)).